Here is a 383-residue protein sequence, read N- to C-terminus: L-lactate dehydrogenase (383 aa).

The region spanning 1–380 (MIISSTFDYR…THESLASTDA (380 aa)) is the FMN hydroxy acid dehydrogenase domain. Tyr24 is a substrate binding site. The FMN site is built by Ser106 and Gln127. Substrate is bound at residue Tyr129. Thr155 is a binding site for FMN. Arg164 lines the substrate pocket. Residue Lys251 coordinates FMN. His275 functions as the Proton acceptor in the catalytic mechanism. Arg278 lines the substrate pocket. 306-330 (DSGVRSGLDVVRMIAQGADAVMIGR) contacts FMN.

Belongs to the FMN-dependent alpha-hydroxy acid dehydrogenase family. FMN serves as cofactor.

It localises to the cell inner membrane. The enzyme catalyses (S)-lactate + A = pyruvate + AH2. Its function is as follows. Catalyzes the conversion of L-lactate to pyruvate. Is coupled to the respiratory chain. This Bartonella quintana (strain Toulouse) (Rochalimaea quintana) protein is L-lactate dehydrogenase.